A 585-amino-acid polypeptide reads, in one-letter code: A-type ATP synthase subunit A (585 aa).

Residue 231–238 participates in ATP binding; the sequence is GPFGSGKT.

It belongs to the ATPase alpha/beta chains family. Has multiple subunits with at least A(3), B(3), C, D, E, F, H, I and proteolipid K(x).

The protein resides in the cell membrane. It carries out the reaction ATP + H2O + 4 H(+)(in) = ADP + phosphate + 5 H(+)(out). In terms of biological role, component of the A-type ATP synthase that produces ATP from ADP in the presence of a proton gradient across the membrane. The A chain is the catalytic subunit. This is A-type ATP synthase subunit A from Thermococcus gammatolerans (strain DSM 15229 / JCM 11827 / EJ3).